A 1357-amino-acid polypeptide reads, in one-letter code: Kinectin (1357 aa).

The Cytoplasmic segment spans residues 1-6; that stretch reads MEFYES. A helical; Signal-anchor for type II membrane protein membrane pass occupies residues 7 to 29; it reads AYFIVLIPSIVITVIFLFFWLFM. Over 30–1357 the chain is Lumenal; the sequence is KETLYDEVLA…KEKEHYQVLE (1328 aa). Disordered stretches follow at residues 48–81 and 103–218; these read IPTK…ESVP and NVVE…KQKT. A Phosphoserine; by FAM20C modification is found at Ser-75. Ser-77 carries the post-translational modification Phosphoserine. A compositionally biased stretch (basic and acidic residues) spans 121 to 135; it reads QKPVLEEQVIKESDA. A Phosphothreonine modification is found at Thr-153. Ser-156 carries the post-translational modification Phosphoserine. A compositionally biased stretch (basic residues) spans 161 to 171; sequence SKKKPGQKKSK. N-linked (GlcNAc...) asparagine glycans are attached at residues Asn-172, Asn-435, Asn-772, Asn-904, and Asn-1055. Over residues 172-182 the composition is skewed to basic and acidic residues; that stretch reads NGSDDQDKKVE. The stretch at 330 to 1356 forms a coiled coil; it reads LIHQLQEKDK…TKEKEHYQVL (1027 aa). The residue at position 1084 (Ser-1084) is a Phosphoserine. N-linked (GlcNAc...) asparagine glycosylation is found at Asn-1088 and Asn-1263. Ser-1313 is subject to Phosphoserine. Asn-1329 is a glycosylation site (N-linked (GlcNAc...) asparagine).

The protein belongs to the kinectin family. As to quaternary structure, parallel homodimers formed between the membrane-bound and the cytosolic form, and also between 2 cytosolic forms. In terms of tissue distribution, high levels in peripheral blood lymphocytes, testis and ovary, lower levels in spleen, thymus, prostate, small intestine and colon.

Its subcellular location is the endoplasmic reticulum membrane. Receptor for kinesin thus involved in kinesin-driven vesicle motility. Accumulates in integrin-based adhesion complexes (IAC) upon integrin aggregation by fibronectin. The chain is Kinectin (KTN1) from Homo sapiens (Human).